The primary structure comprises 557 residues: MALLSEELSSILPNPDFDDEEEDYVERETSHADERQIGVKFHIPPYGQRKGWFPSSPEDFGDGGAFPEIHVAQYPLDMGRKRSAKSAGNTLALQVTSSGAVDYNAIARQGHEHGELVQASFRDLIPLRARLGVGEISLEKPSDEQKQEVANKTKLALQKILSKQIAQSQPKSAVVQQRDDPVYIRYTPSNQMGQALSKQRIIKMVTAEQDPMEPPKFRHKKVPRGPPSPPPPVLHSPPRKVSAQEQQDWQIPPSISNWKNPKGYTIPLDKRLAADGRGLNDVEINDGFAKFSEALYTVERQAREEVRYRAIMRQKMAEKEKQEKEQRLFMLAQKAREDRMGRNAASSGPSHAKPRSTSVSSEERSRSRAGSFSHHSESENEDEDSEAFRRRQELRRERRRQAEKDLRLSRMGAEKRAKLAEKDRPRDVAERVALGLSKPSMSSDTMIDSRLFNQASGLGSGFQDEDSYNVYDKPWRAAPSSTLYRPGATLSRQVDASAELERITSESRYDVLGNAHKKFKGSDEVVESRAGPVTFEKDIADPFGVDTFLNNVSSKKT.

3 disordered regions span residues 1-32 (MALLSEELSSILPNPDFDDEEEDYVERETSHA), 208-243 (EQDPMEPPKFRHKKVPRGPPSPPPPVLHSPPRKVSA), and 316-444 (MAEK…MSSD). Residues 16–25 (DFDDEEEDYV) are compositionally biased toward acidic residues. A compositionally biased stretch (pro residues) spans 224–235 (RGPPSPPPPVLH). 2 positions are modified to phosphoserine: Ser228 and Ser236. The segment covering 316 to 327 (MAEKEKQEKEQR) has biased composition (basic and acidic residues). Ser376 carries the phosphoserine modification. Over residues 386 to 430 (EAFRRRQELRRERRRQAEKDLRLSRMGAEKRAKLAEKDRPRDVAE) the composition is skewed to basic and acidic residues.

Belongs to the SNW family. Homodimer. Interacts with cyp1 and the small 23 kDa subunit of the splicing factor U2AF (u2af23). Belongs to the 40S cdc5-associated complex (or cwf complex), a spliceosome sub-complex reminiscent of a late-stage spliceosome composed of the U2, U5 and U6 snRNAs and at least brr2, cdc5, cwf2/prp3, cwf3/syf1, cwf4/syf3, cwf5/ecm2, spp42/cwf6, cwf7/spf27, cwf8, cwf9, cwf10, cwf11, cwf12, prp45/cwf13, cwf14, cwf15, cwf16, cwf17, cwf18, cwf19, cwf20, cwf21, cwf22, cwf23, cwf24, cwf25, cwf26, cyp7/cwf27, cwf28, cwf29/ist3, lea1, msl1, prp5/cwf1, prp10, prp12/sap130, prp17, prp22, sap61, sap62, sap114, sap145, slu7, smb1, smd1, smd3, smf1, smg1 and syf2.

The protein localises to the nucleus. Involved in pre-mRNA splicing. This chain is Pre-mRNA-processing protein 45 (prp45), found in Schizosaccharomyces pombe (strain 972 / ATCC 24843) (Fission yeast).